The primary structure comprises 284 residues: 2-dehydro-3-deoxyphosphooctonate aldolase (284 aa).

It belongs to the KdsA family.

The protein resides in the cytoplasm. It catalyses the reaction D-arabinose 5-phosphate + phosphoenolpyruvate + H2O = 3-deoxy-alpha-D-manno-2-octulosonate-8-phosphate + phosphate. It participates in carbohydrate biosynthesis; 3-deoxy-D-manno-octulosonate biosynthesis; 3-deoxy-D-manno-octulosonate from D-ribulose 5-phosphate: step 2/3. Its pathway is bacterial outer membrane biogenesis; lipopolysaccharide biosynthesis. This is 2-dehydro-3-deoxyphosphooctonate aldolase from Photobacterium profundum (strain SS9).